The chain runs to 311 residues: MNHTMVTEFVLLGLSDDPDLQIVIFLFLFITYILSVTGNLTIITLTFVDSHLQTPMYFFLRNFSFLEISFTTVCIPRFLGAIITRNKTISYNNCAAQLFFFIFMGVTEFYILTAMSYDRYVAICKPLHYTSIMNRKLCTLLVLCAWLSGFLTIFPPLMLLLQLDYCASNVIDHFACDYFPLLQLSCSDTWLLEVIGFYFALVTLLFTLALVILSYMYIIRTILRIPSASQRKKAFSTCSSHMIVISISYGSCIFMYANPSAKEKASLTKGIAILNTSVAPMLNPFIYTLRNQQVKQAFKNVVHKVVFYANQ.

Topologically, residues 1–22 (MNHTMVTEFVLLGLSDDPDLQI) are extracellular. Asn2 is a glycosylation site (N-linked (GlcNAc...) asparagine). A helical membrane pass occupies residues 23–43 (VIFLFLFITYILSVTGNLTII). Topologically, residues 44–51 (TLTFVDSH) are cytoplasmic. Residues 52 to 72 (LQTPMYFFLRNFSFLEISFTT) traverse the membrane as a helical segment. Residues 73 to 96 (VCIPRFLGAIITRNKTISYNNCAA) lie on the Extracellular side of the membrane. A disulfide bridge links Cys94 with Cys186. The helical transmembrane segment at 97–117 (QLFFFIFMGVTEFYILTAMSY) threads the bilayer. Over 118–136 (DRYVAICKPLHYTSIMNRK) the chain is Cytoplasmic. A helical transmembrane segment spans residues 137-157 (LCTLLVLCAWLSGFLTIFPPL). The Extracellular portion of the chain corresponds to 158–194 (MLLLQLDYCASNVIDHFACDYFPLLQLSCSDTWLLEV). Residues 195 to 214 (IGFYFALVTLLFTLALVILS) traverse the membrane as a helical segment. Over 215 to 234 (YMYIIRTILRIPSASQRKKA) the chain is Cytoplasmic. The chain crosses the membrane as a helical span at residues 235–255 (FSTCSSHMIVISISYGSCIFM). The Extracellular portion of the chain corresponds to 256–268 (YANPSAKEKASLT). A helical transmembrane segment spans residues 269–289 (KGIAILNTSVAPMLNPFIYTL). Over 290–311 (RNQQVKQAFKNVVHKVVFYANQ) the chain is Cytoplasmic.

The protein belongs to the G-protein coupled receptor 1 family.

The protein resides in the cell membrane. Functionally, odorant receptor. This Homo sapiens (Human) protein is Olfactory receptor 6C3 (OR6C3).